A 231-amino-acid chain; its full sequence is uncharacterized protein (231 aa).

The next 6 helical transmembrane spans lie at 4–24, 29–49, 58–78, 95–115, 147–167, and 211–231; these read YIIYLYTFLTIFGFWLALQIS, SMIFNTFVLTVLILAAILVIG, AGNAPINNLLGLSIVALALPL, TVVIASFLAMLSGGLLALLLG, VTAVGVVVAGLQGSIFGYLVL, and LCGIISSILAPFVFKLIYFFV.

The protein belongs to the YohK (E.coli)/YwbG (IPA-22R) (B.subtilis) family.

It is found in the cell membrane. This is an uncharacterized protein from Haemophilus influenzae (strain ATCC 51907 / DSM 11121 / KW20 / Rd).